Consider the following 445-residue polypeptide: Alpha/beta hydrolase psoB (445 aa).

Ser246 serves as the catalytic Nucleophile.

This sequence belongs to the AB hydrolase superfamily. FUS2 hydrolase family. Homodimer.

Its pathway is secondary metabolite biosynthesis. Its function is as follows. Alpha/beta hydrolase; part of the gene cluster that mediates the biosynthesis of pseurotin A, a competitive inhibitor of chitin synthase and an inducer of nerve-cell proliferation. The PKS-NRPS hybrid synthetase psoA is responsible for the biosynthesis of azaspirene, one of the first intermediates having the 1-oxa-7-azaspiro[4,4]-non-2-ene-4,6-dione core of pseurotin, via condensation of one acetyl-CoA, 4 malonyl-CoA, and a L-phenylalanine molecule. The dual-functional monooxygenase/methyltransferase psoF seems to be involved in the addition of the C3 methyl group onto the pseurotin scaffold. Azaspirene is then converted to synerazol through 4 steps including oxidation of C17 by the cytochrome P450 monooxygenase psoD, O-methylation of the hydroxy group of C8 by the methyltransferase psoC, and the trans-to-cis isomerization of the C13 olefin by the glutathione S-transferase psoE. The fourth step of synerazol production is performed by the dual-functional monooxygenase/methyltransferase psoF which seems to catalyze the epoxidation of the intermediate deepoxy-synerazol. Synerazol can be attacked by a water molecule nonenzymatically at two different positions to yield two diol products, pseurotin A and pseurotin D. The polypeptide is Alpha/beta hydrolase psoB (Aspergillus fumigatus (strain ATCC MYA-4609 / CBS 101355 / FGSC A1100 / Af293) (Neosartorya fumigata)).